A 2288-amino-acid polypeptide reads, in one-letter code: Protein Ycf2 (2288 aa).

An ATP-binding site is contributed by 1629 to 1636 (GSIGTGRS).

This sequence belongs to the Ycf2 family.

The protein resides in the plastid. The protein localises to the chloroplast stroma. Functionally, probable ATPase of unknown function. Its presence in a non-photosynthetic plant (Epifagus virginiana) and experiments in tobacco indicate that it has an essential function which is probably not related to photosynthesis. This chain is Protein Ycf2, found in Phaseolus vulgaris (Kidney bean).